We begin with the raw amino-acid sequence, 385 residues long: Suppressor protein STP22 of temperature-sensitive alpha-factor receptor and arginine permease (385 aa).

The UEV domain maps to 12–161 (AVVNWLFKVI…LHEPPQDQAP (150 aa)). The disordered stretch occupies residues 155–219 (PPQDQAPSLP…DMDNTDISPT (65 aa)). A compositionally biased stretch (polar residues) spans 168 to 177 (NTQLQQEQNT). Residues 178 to 201 (PPLPPKPKSPHLKPPLPPPPPPQP) show a composition bias toward pro residues. Positions 272–300 (LRAVEQAIEQTMHSLNAQIDVLTANRAKV) form a coiled coil. Residues 322 to 385 (TDGLNQLYNL…HIQRITSPLS (64 aa)) enclose the SB domain.

It belongs to the ubiquitin-conjugating enzyme family. UEV subfamily. Component of the ESCRT-I complex (endosomal sorting complex required for transport I) which consists of STP22, VPS28, SRN2 and MVB12 in a 1:1:1:1 stoichiometry. Interacts with HSE1 and VPS27. Interacts with MVB12 and SRN2.

It localises to the cytoplasm. Its subcellular location is the endosome. The protein resides in the late endosome membrane. Functionally, component of the ESCRT-I complex, a regulator of vesicular trafficking process. Binds to ubiquitinated cargo proteins and is required for the sorting of endocytic ubiquitinated cargos into multivesicular bodies (MVBs). Mediates the association to the ESCRT-0 complex. Required for vacuolar targeting of temperature-sensitive plasma membrane proteins STE2 and CAN1. The polypeptide is Suppressor protein STP22 of temperature-sensitive alpha-factor receptor and arginine permease (STP22) (Saccharomyces cerevisiae (strain ATCC 204508 / S288c) (Baker's yeast)).